The primary structure comprises 66 residues: VRDGYIALPHNCAYGCLNNEYCNNLCTKDGAKIGYCNIVGKYGNACWCIQLPDNVPIRVPGRCHPA.

The 63-residue stretch at 2 to 64 folds into the LCN-type CS-alpha/beta domain; the sequence is RDGYIALPHN…VPIRVPGRCH (63 aa). 4 disulfides stabilise this stretch: Cys-12–Cys-63, Cys-16–Cys-36, Cys-22–Cys-46, and Cys-26–Cys-48.

It belongs to the long (4 C-C) scorpion toxin superfamily. Sodium channel inhibitor family. Alpha subfamily. Expressed by the venom gland.

Its subcellular location is the secreted. Functionally, alpha toxins bind voltage-independently at site-3 of sodium channels (Nav) and inhibit the inactivation of the activated channels, thereby blocking neuronal transmission. This toxin is active on both mammals and insects. It can be considered as a cardiotoxin, as it can bind to human cardiac sodium channel and modify its normal properties. The chain is Alpha-like toxin BmK-M7 from Olivierus martensii (Manchurian scorpion).